The sequence spans 172 residues: Nicotinamide-nucleotide adenylyltransferase (172 aa).

This sequence belongs to the archaeal NMN adenylyltransferase family.

Its subcellular location is the cytoplasm. It catalyses the reaction beta-nicotinamide D-ribonucleotide + ATP + H(+) = diphosphate + NAD(+). Its pathway is cofactor biosynthesis; NAD(+) biosynthesis; NAD(+) from nicotinamide D-ribonucleotide: step 1/1. This Methanococcus aeolicus (strain ATCC BAA-1280 / DSM 17508 / OCM 812 / Nankai-3) protein is Nicotinamide-nucleotide adenylyltransferase.